Reading from the N-terminus, the 693-residue chain is Polyribonucleotide nucleotidyltransferase (693 aa).

Residues D489 and D495 each contribute to the Mg(2+) site. In terms of domain architecture, KH spans 556-615 (PQIHVMNINPAKIKDVVGRGGATVKGIVEKTGAQIDTSDSGEVKVFAKDKKSMDMAVAMI). An S1 motif domain is found at 625-693 (GQVYKGKIVK…GRVKLSLVAR (69 aa)).

It belongs to the polyribonucleotide nucleotidyltransferase family. Component of the RNA degradosome, which is a multiprotein complex involved in RNA processing and mRNA degradation. Requires Mg(2+) as cofactor.

The protein resides in the cytoplasm. The enzyme catalyses RNA(n+1) + phosphate = RNA(n) + a ribonucleoside 5'-diphosphate. Its function is as follows. Involved in mRNA degradation. Catalyzes the phosphorolysis of single-stranded polyribonucleotides processively in the 3'- to 5'-direction. The protein is Polyribonucleotide nucleotidyltransferase of Francisella tularensis subsp. novicida (strain U112).